A 498-amino-acid polypeptide reads, in one-letter code: ATP synthase subunit beta, chloroplastic (498 aa).

172–179 (GGAGVGKT) provides a ligand contact to ATP.

Belongs to the ATPase alpha/beta chains family. F-type ATPases have 2 components, CF(1) - the catalytic core - and CF(0) - the membrane proton channel. CF(1) has five subunits: alpha(3), beta(3), gamma(1), delta(1), epsilon(1). CF(0) has four main subunits: a(1), b(1), b'(1) and c(9-12).

The protein resides in the plastid. It is found in the chloroplast thylakoid membrane. The catalysed reaction is ATP + H2O + 4 H(+)(in) = ADP + phosphate + 5 H(+)(out). Functionally, produces ATP from ADP in the presence of a proton gradient across the membrane. The catalytic sites are hosted primarily by the beta subunits. This Oryza nivara (Indian wild rice) protein is ATP synthase subunit beta, chloroplastic.